The chain runs to 499 residues: Glycerol kinase (499 aa).

Thr12 provides a ligand contact to ADP. Residues Thr12, Thr13, and Ser14 each contribute to the ATP site. Sn-glycerol 3-phosphate is bound at residue Thr12. Arg16 provides a ligand contact to ADP. Sn-glycerol 3-phosphate is bound by residues Arg82, Glu83, Tyr134, and Asp245. The glycerol site is built by Arg82, Glu83, Tyr134, Asp245, and Gln246. Positions 267 and 311 each coordinate ADP. Residues Thr267, Gly311, Gln315, and Gly412 each coordinate ATP. Residues Gly412 and Asn416 each contribute to the ADP site.

This sequence belongs to the FGGY kinase family.

It carries out the reaction glycerol + ATP = sn-glycerol 3-phosphate + ADP + H(+). Its pathway is polyol metabolism; glycerol degradation via glycerol kinase pathway; sn-glycerol 3-phosphate from glycerol: step 1/1. Inhibited by fructose 1,6-bisphosphate (FBP). In terms of biological role, key enzyme in the regulation of glycerol uptake and metabolism. Catalyzes the phosphorylation of glycerol to yield sn-glycerol 3-phosphate. This Acidiphilium cryptum (strain JF-5) protein is Glycerol kinase.